The chain runs to 270 residues: A-type potassium channel modulatory protein KCNIP2 (270 aa).

Basic and acidic residues predominate over residues 1 to 17 (MRGQGRKESLSESRDLD). A disordered region spans residues 1 to 34 (MRGQGRKESLSESRDLDGSYDQLTGHPPGPSKKA). At serine 9 the chain carries Phosphoserine. S-palmitoyl cysteine attachment occurs at residues cysteine 45 and cysteine 46. The EF-hand 1; degenerate domain maps to 81–137 (FELSTVCHRPEGLEQLQEQTKFTRRELQVLYRGFKNECPSGIVNEENFKQIYSQFFP). 3 consecutive EF-hand domains span residues 140–175 (DSSN…ILRG), 176–211 (TIDD…IYDM), and 224–259 (APRE…DENI). Ca(2+)-binding residues include aspartate 153, asparagine 155, aspartate 157, serine 159, aspartate 164, aspartate 189, asparagine 191, aspartate 193, cysteine 195, glutamate 200, aspartate 237, asparagine 239, aspartate 241, and glutamate 248. The segment at 257–270 (ENIMRSMQLFDNVI) is interaction with KCND2.

It belongs to the recoverin family. As to quaternary structure, component of heteromultimeric potassium channels. Identified in potassium channel complexes containing KCND1, KCND2, KCND3, KCNIP1, KCNIP2, KCNIP3, KCNIP4, DPP6 and DPP10. The KCND2-KCNIP2 channel complex contains four KCND2 and four KCNIP2 subunits. Interacts with KCND2. Probably part of a complex consisting of KCNIP1, KCNIP2 isoform 3 and KCND2. At least isoform 2 and isoform 3 can self-associate to form homodimers and homotetramers. Isoform 3 interacts with KCNIP1 in a calcium-dependent manner. Interacts with KCND3; each KCNIP2 monomer interacts with two adjacent KCND3 subunits, through both the N-terminal inactivation ball of a KCND3 subunit and a C-terminal helix from the adjacent KCND3 subunit, clamping them together; this interaction modulates the channel gating kinetics. In terms of processing, palmitoylated. Palmitoylation enhances association with the plasma membrane. Expressed in heart, brain and lung. In brain, abundantly expressed in striatum, hippocampus and olfactory bulb, moderately expressed in cerebral cortex and lowly expressed in thalamus and hypothalamus. Isoform 1 is predominant in cerebral cortex, striatum and hippocampus. Isoform 1, isoform 2 and isoform 3 are equally expressed in olfactory bulb. Iisoform 3 is expressed at high levels and isoform 1 at low levels in heart (in PubMed:11263977).

Its subcellular location is the cell membrane. Functionally, regulatory subunit of Kv4/D (Shal)-type voltage-gated rapidly inactivating A-type potassium channels. Modulates channel density, inactivation kinetics and rate of recovery from inactivation in a calcium-dependent and isoform-specific manner. Involved in KCND2 and KCND3 trafficking to the cell surface. Essential for the expression of I(To) currents in the heart. Required for normal protein levels of KCND2 in the heart ventricle. The chain is A-type potassium channel modulatory protein KCNIP2 from Rattus norvegicus (Rat).